Consider the following 97-residue polypeptide: Type VII secretion system extracellular protein A (97 aa).

A coiled-coil region spans residues 61–93 (KVEKFAQLLEEIKQQLNSTADAVQEQDQQLSNN).

The protein belongs to the WXG100 family. sagEsxA-like subfamily. In terms of assembly, forms both homodimers and heterodimers with EsxC.

It is found in the secreted. Its function is as follows. Virulence factor that is important for the establishment of infection in the host. EsxA is required for EsxB synthesis as well as secretion. Modulates host cell apoptotic pathways and mediates together with EsxB the release of S.aureus from the host cell. By acting on apoptosis, plays a role in the modulation of dendritic cell-mediated immunity. In Staphylococcus aureus (strain USA300), this protein is Type VII secretion system extracellular protein A.